The chain runs to 458 residues: UDP-N-acetylmuramate--L-alanine ligase (458 aa).

ATP is bound at residue glycine 112–threonine 118.

The protein belongs to the MurCDEF family.

Its subcellular location is the cytoplasm. The enzyme catalyses UDP-N-acetyl-alpha-D-muramate + L-alanine + ATP = UDP-N-acetyl-alpha-D-muramoyl-L-alanine + ADP + phosphate + H(+). The protein operates within cell wall biogenesis; peptidoglycan biosynthesis. Cell wall formation. The protein is UDP-N-acetylmuramate--L-alanine ligase of Geotalea daltonii (strain DSM 22248 / JCM 15807 / FRC-32) (Geobacter daltonii).